A 122-amino-acid polypeptide reads, in one-letter code: Large ribosomal subunit protein bL12 (122 aa).

The protein belongs to the bacterial ribosomal protein bL12 family. In terms of assembly, homodimer. Part of the ribosomal stalk of the 50S ribosomal subunit. Forms a multimeric L10(L12)X complex, where L10 forms an elongated spine to which 2 to 4 L12 dimers bind in a sequential fashion. Binds GTP-bound translation factors.

Forms part of the ribosomal stalk which helps the ribosome interact with GTP-bound translation factors. Is thus essential for accurate translation. The sequence is that of Large ribosomal subunit protein bL12 from Dichelobacter nodosus (strain VCS1703A).